Here is a 161-residue protein sequence, read N- to C-terminus: Protein-export protein SecB (161 aa).

Belongs to the SecB family. In terms of assembly, homotetramer, a dimer of dimers. One homotetramer interacts with 1 SecA dimer.

Its subcellular location is the cytoplasm. In terms of biological role, one of the proteins required for the normal export of preproteins out of the cell cytoplasm. It is a molecular chaperone that binds to a subset of precursor proteins, maintaining them in a translocation-competent state. It also specifically binds to its receptor SecA. This chain is Protein-export protein SecB, found in Coxiella burnetii (strain CbuG_Q212) (Coxiella burnetii (strain Q212)).